A 285-amino-acid chain; its full sequence is Protease HtpX homolog (285 aa).

2 helical membrane-spanning segments follow: residues 7–27 and 30–50; these read TAMLMAAITALFIVIGGMIGG and GMTIALLIALGMNFFSYWFSD. Residue histidine 131 coordinates Zn(2+). Residue glutamate 132 is part of the active site. Histidine 135 is a Zn(2+) binding site. 2 consecutive transmembrane segments (helical) span residues 146-166 and 177-197; these read ISATMAGAISALANFAMFFGG and IAGIAVALLAPIAGALIQMAI. Glutamate 202 contributes to the Zn(2+) binding site.

The protein belongs to the peptidase M48B family. Zn(2+) is required as a cofactor.

It is found in the cell inner membrane. This chain is Protease HtpX homolog, found in Burkholderia mallei (strain NCTC 10247).